The following is a 142-amino-acid chain: Cellulose/chitin binding protein BQ2027_MB2009 (142 aa).

An N-terminal signal peptide occupies residues 1-37; the sequence is MAGLNIYVRRWRTALHATVSALIVAILGLAITPVASA. A CBM2 domain is found at 38–142; that stretch reads ATARATLSVT…CLLNGQYPCT (105 aa).

The protein localises to the secreted. It localises to the cell wall. Its subcellular location is the cell membrane. In terms of biological role, carbohydrate binding protein that binds chitin and cellulose. Lacks enzymatic activity and does not hydrolyze chitin and cellulose. May interact with mycobacterial biofilms, which are rich in cellulose, and play a role in biofilm formation. Could also act as an adhesin, improving the initial attachment to host cells and aiding M.bovis during the initial stages of infection. May act as a virulence factor that modulates host immune responses and contributes to host immune evasion. The protein is Cellulose/chitin binding protein BQ2027_MB2009 of Mycobacterium bovis (strain ATCC BAA-935 / AF2122/97).